We begin with the raw amino-acid sequence, 864 residues long: Leukocyte tyrosine kinase receptor (864 aa).

The N-terminal stretch at 1 to 16 is a signal peptide; it reads MGCWGQLLVWFGAAGA. At 17-424 the chain is on the extracellular side; it reads ILCSSPGSQE…CMDLHKPPGP (408 aa). Residues 30 to 40 are compositionally biased toward low complexity; it reads RSSPLPLASPS. The tract at residues 30 to 64 is disordered; the sequence is RSSPLPLASPSPRDPKVSAPPSILEPASPLNSPGT. 2 disulfide bridges follow: cysteine 73–cysteine 86 and cysteine 168–cysteine 179. Positions 239 to 297 are disordered; it reads YLRPRDRGRTQASPEKLENRSEAPGSGGRGGAAGGGGGWTSRAPSPQAGRSLQEGAEGG. A compositionally biased stretch (basic and acidic residues) spans 241-259; the sequence is RPRDRGRTQASPEKLENRS. The N-linked (GlcNAc...) asparagine glycan is linked to asparagine 257. Residues 263-277 are compositionally biased toward gly residues; sequence GSGGRGGAAGGGGGW. Cysteine 300 and cysteine 322 are oxidised to a cystine. 2 N-linked (GlcNAc...) asparagine glycosylation sites follow: asparagine 380 and asparagine 412. A helical membrane pass occupies residues 425-449; sequence LVLMVAVVATSTLSLLMVCGVLILV. Residues 450 to 864 are Cytoplasmic-facing; the sequence is KQKKWQGLQE…QNLWNPTYRS (415 aa). The 277-residue stretch at 510–786 folds into the Protein kinase domain; the sequence is VTLLRALGHG…LQYCTQDPDV (277 aa). ATP-binding positions include 516 to 524 and lysine 544; that span reads LGHGAFGEV. Aspartate 643 acts as the Proton acceptor in catalysis. Tyrosine 676 is subject to Phosphotyrosine; by autocatalysis. Disordered stretches follow at residues 790 to 830 and 842 to 864; these read LLPM…KLKS and SGLK…TYRS. The span at 852 to 864 shows a compositional bias: polar residues; the sequence is LQPQNLWNPTYRS.

This sequence belongs to the protein kinase superfamily. Tyr protein kinase family. Insulin receptor subfamily. As to quaternary structure, homodimer; homodimerizes following ligand-binding. Part of a complex including LTK, TNK2 and GRB2, in which GRB2 promotes LTK recruitment by TNK2. Phosphorylated at tyrosine residues by autocatalysis, which activates kinase activity. In terms of tissue distribution, expressed in non-hematopoietic cell lines and T- and B-cell lines.

It localises to the cell membrane. The catalysed reaction is L-tyrosyl-[protein] + ATP = O-phospho-L-tyrosyl-[protein] + ADP + H(+). Its activity is regulated as follows. Activated by ligand-binding, leading to homodimerization and autophosphorylation. Receptor with a tyrosine-protein kinase activity. Following activation by ALKAL1 or ALKAL2 ligands at the cell surface, transduces an extracellular signal into an intracellular response. Ligand-binding to the extracellular domain induces tyrosine kinase activation, leading to activation of the mitogen-activated protein kinase (MAPK) pathway. Phosphorylates almost exclusively at the first tyrosine of the Y-x-x-x-Y-Y motif. The exact function of this protein is not known; studies with chimeric proteins demonstrate its ability to promote growth and specifically neurite outgrowth, and cell survival. Involved in regulation of the secretory pathway involving endoplasmic reticulum (ER) export sites (ERESs) and ER to Golgi transport. The chain is Leukocyte tyrosine kinase receptor from Homo sapiens (Human).